Consider the following 364-residue polypeptide: Fructose-bisphosphate aldolase A (364 aa).

A Phosphotyrosine modification is found at Y5. T9 bears the Phosphothreonine mark. A phosphoserine mark is found at S36 and S39. Position 42 is an N6-acetyllysine; alternate (K42). A Glycyl lysine isopeptide (Lys-Gly) (interchain with G-Cter in SUMO1); alternate cross-link involves residue K42. A Glycyl lysine isopeptide (Lys-Gly) (interchain with G-Cter in SUMO2); alternate cross-link involves residue K42. R43 is a beta-D-fructose 1,6-bisphosphate binding site. Residue S46 is modified to Phosphoserine. K99 is modified (N6-(2-hydroxyisobutyryl)lysine). N6-acetyllysine is present on K108. The residue at position 111 (K111) is an N6-acetyllysine; alternate. K111 is modified (N6-malonyllysine; alternate). The residue at position 132 (S132) is a Phosphoserine. N6-(2-hydroxyisobutyryl)lysine is present on K147. E188 (proton acceptor) is an active-site residue. K230 acts as the Schiff-base intermediate with dihydroxyacetone-P in catalysis. Phosphoserine is present on S272. Residues 272–274 (SGG), S301, and R304 contribute to the beta-D-fructose 1,6-bisphosphate site. K312 is subject to N6-malonyllysine. An N6-acetyllysine modification is found at K330.

This sequence belongs to the class I fructose-bisphosphate aldolase family. Homotetramer. Interacts with SNX9 and WAS. Interacts with FBP2; the interaction blocks FBP2 inhibition by physiological concentrations of AMP and reduces inhibition by Ca(2+).

Its subcellular location is the cytoplasm. It localises to the myofibril. The protein localises to the sarcomere. The protein resides in the i band. It is found in the m line. It catalyses the reaction beta-D-fructose 1,6-bisphosphate = D-glyceraldehyde 3-phosphate + dihydroxyacetone phosphate. It participates in carbohydrate degradation; glycolysis; D-glyceraldehyde 3-phosphate and glycerone phosphate from D-glucose: step 4/4. In terms of biological role, catalyzes the reversible conversion of beta-D-fructose 1,6-bisphosphate (FBP) into two triose phosphate and plays a key role in glycolysis and gluconeogenesis. In addition, may also function as scaffolding protein. The protein is Fructose-bisphosphate aldolase A (Aldoa) of Mus musculus (Mouse).